A 151-amino-acid chain; its full sequence is Transcriptional repressor NrdR (151 aa).

Residues 3–34 fold into a zinc finger; the sequence is CPFCNSVDTSVKNSRPSDCKMSVRRRRSCDSC. The region spanning 49-139 is the ATP-cone domain; that stretch reads VKVLKKDGSV…VYMNFSDVND (91 aa).

It belongs to the NrdR family. Zn(2+) serves as cofactor.

Its function is as follows. Negatively regulates transcription of bacterial ribonucleotide reductase nrd genes and operons by binding to NrdR-boxes. The chain is Transcriptional repressor NrdR from Anaplasma marginale (strain Florida).